The primary structure comprises 276 residues: Kallikrein-10 (276 aa).

The signal sequence occupies residues 1 to 30 (MRAPHLHLSAASGARALAKLLPLLMAQLWA). Asparagine 39 is a glycosylation site (N-linked (GlcNAc...) asparagine). The 228-residue stretch at 47-274 (AYGSPCARGS…YMSWINKVIR (228 aa)) folds into the Peptidase S1 domain. Cystine bridges form between cysteine 52–cysteine 162, cysteine 71–cysteine 87, cysteine 169–cysteine 235, cysteine 201–cysteine 215, and cysteine 225–cysteine 250. Catalysis depends on charge relay system residues histidine 86 and aspartate 137. Serine 229 functions as the Charge relay system in the catalytic mechanism.

It belongs to the peptidase S1 family. Kallikrein subfamily. As to expression, expressed in breast, ovary and prostate.

The protein localises to the secreted. Its function is as follows. Has a tumor-suppressor role for NES1 in breast and prostate cancer. The sequence is that of Kallikrein-10 (KLK10) from Homo sapiens (Human).